A 995-amino-acid chain; its full sequence is UPF0182 protein NFA_45260 (995 aa).

The next 7 helical transmembrane spans lie at 18 to 38 (VLLV…RFTD), 63 to 83 (IILF…ALLL), 115 to 135 (FGIG…QSNW), 176 to 196 (FVAV…FGGL), 211 to 231 (IQLA…YWFD), 260 to 280 (KLIL…GVVL), and 288 to 308 (MAAA…PLVV). A disordered region spans residues 904 to 957 (ATPFGGDPATRPQPGTAPPVVDSTQPPADGGTPQPQTTPPPTGSAAKDAAAAEL). Composition is skewed to low complexity over residues 927 to 938 (TQPPADGGTPQP) and 946 to 955 (GSAAKDAAAA).

The protein belongs to the UPF0182 family.

Its subcellular location is the cell membrane. The sequence is that of UPF0182 protein NFA_45260 from Nocardia farcinica (strain IFM 10152).